Consider the following 298-residue polypeptide: Nucleotide-binding protein MAV_3359 (298 aa).

Position 18-25 (18-25) interacts with ATP; the sequence is GLSGAGRG. 69 to 72 contributes to the GTP binding site; it reads DVRS.

The protein belongs to the RapZ-like family.

Functionally, displays ATPase and GTPase activities. This is Nucleotide-binding protein MAV_3359 from Mycobacterium avium (strain 104).